We begin with the raw amino-acid sequence, 702 residues long: Glucosidase 2 subunit beta (702 aa).

The N-terminal stretch at Met1–Ser20 is a signal peptide. A glycan (N-linked (GlcNAc...) asparagine) is linked at Asn145. A coiled-coil region spans residues Ser163–Ser228. Asn240 and Asn358 each carry an N-linked (GlcNAc...) asparagine glycan. Residues Pro435 to Ser457 are disordered. Positions Lys478–Glu517 form a coiled coil. Residues Asn520 and Asn525 are each glycosylated (N-linked (GlcNAc...) asparagine). The MRH domain maps to Ser537–Lys689. Disulfide bonds link Cys539–Cys552, Cys646–Cys675, and Cys660–Cys687. 2 N-linked (GlcNAc...) asparagine glycosylation sites follow: Asn688 and Asn699.

In terms of assembly, heterodimer of a catalytic subunit alpha (ROT2) and a subunit beta (GTB1).

It is found in the endoplasmic reticulum. Subunit of glucosidase 2, which cleaves sequentially the 2 innermost alpha-1,3-linked glucose residues from the Glc(2)Man(9)GlcNAc(2) oligosaccharide precursor of immature glycoproteins. Specifically required for the cleavage of the final glucose. This Saccharomyces cerevisiae (strain ATCC 204508 / S288c) (Baker's yeast) protein is Glucosidase 2 subunit beta (GTB1).